Consider the following 463-residue polypeptide: Probable transport protein HsrA (463 aa).

14 consecutive transmembrane segments (helical) span residues 10 to 30, 49 to 69, 82 to 102, 107 to 127, 139 to 159, 165 to 185, 197 to 217, 225 to 245, 267 to 287, 298 to 318, 328 to 348, 354 to 374, 393 to 413, and 429 to 449; these read GLAW…TILN, MAII…AWAA, VFTF…ESLI, IQGI…IQAV, MATA…WLVI, WIFL…GSVM, WTGF…LDLL, SVTY…CGYA, IIAN…LPLM, MSGW…ILIG, TTLI…AWLD, TWII…FTSI, VLSI…SIIL, and AFSY…WSLM.

The protein belongs to the major facilitator superfamily. EmrB family.

It localises to the cell inner membrane. This chain is Probable transport protein HsrA (hsrA), found in Haemophilus influenzae (strain ATCC 51907 / DSM 11121 / KW20 / Rd).